The following is a 663-amino-acid chain: UvrABC system protein B (663 aa).

Residues 30 to 417 (DGIKAGKRHQ…TDKMVEQIIR (388 aa)) form the Helicase ATP-binding domain. An ATP-binding site is contributed by 43–50 (GATGTGKT). Positions 96-119 (YYDYYQPEAYVPSTDTFIEKDASI) match the Beta-hairpin motif. Residues 434 to 600 (QIDDLLSEIQ…TINKKIHDLI (167 aa)) form the Helicase C-terminal domain. The UVR domain maps to 627-662 (QKTIDNIEKEMKQAAKDLDFEKATELRDMLFELKAE).

This sequence belongs to the UvrB family. As to quaternary structure, forms a heterotetramer with UvrA during the search for lesions. Interacts with UvrC in an incision complex.

It localises to the cytoplasm. Functionally, the UvrABC repair system catalyzes the recognition and processing of DNA lesions. A damage recognition complex composed of 2 UvrA and 2 UvrB subunits scans DNA for abnormalities. Upon binding of the UvrA(2)B(2) complex to a putative damaged site, the DNA wraps around one UvrB monomer. DNA wrap is dependent on ATP binding by UvrB and probably causes local melting of the DNA helix, facilitating insertion of UvrB beta-hairpin between the DNA strands. Then UvrB probes one DNA strand for the presence of a lesion. If a lesion is found the UvrA subunits dissociate and the UvrB-DNA preincision complex is formed. This complex is subsequently bound by UvrC and the second UvrB is released. If no lesion is found, the DNA wraps around the other UvrB subunit that will check the other stand for damage. In Staphylococcus aureus (strain Mu50 / ATCC 700699), this protein is UvrABC system protein B.